Reading from the N-terminus, the 453-residue chain is UDP-glycosyltransferase 76E9 (453 aa).

UDP-alpha-D-glucose is bound by residues S279, A337 to Q339, H354 to E362, and T376 to Q379.

It belongs to the UDP-glycosyltransferase family.

The polypeptide is UDP-glycosyltransferase 76E9 (UGT76E9) (Arabidopsis thaliana (Mouse-ear cress)).